The chain runs to 264 residues: Orotidine 5'-phosphate decarboxylase (264 aa).

Substrate-binding positions include aspartate 37, 59 to 61 (KTH), 91 to 100 (DRKFADIGNT), tyrosine 217, and arginine 235. The Proton donor role is filled by lysine 93.

It belongs to the OMP decarboxylase family.

It catalyses the reaction orotidine 5'-phosphate + H(+) = UMP + CO2. Its pathway is pyrimidine metabolism; UMP biosynthesis via de novo pathway; UMP from orotate: step 2/2. This is Orotidine 5'-phosphate decarboxylase (URA3) from Torulaspora delbrueckii (Yeast).